We begin with the raw amino-acid sequence, 6269 residues long: Nonribosomal peptide synthetase 1 (6269 aa).

Residues 249 to 781 (ENDWSRVCSF…VSGKLDRKSI (533 aa)) form an adenylation 1 region. The Carrier 1 domain occupies 803-879 (RAANSTEDQL…ELATRVKGVT (77 aa)). Serine 840 is subject to O-(pantetheine 4'-phosphoryl)serine. Residues 894 to 1342 (LSPIQKLHFM…TLSDFPMLSL (449 aa)) are epimerase 1. Residues 1373 to 1775 (SRMQQGILLS…FLQSLENIIH (403 aa)) form a condensation 1 region. Positions 1725 to 2333 (HDPAEFPVYV…TGLLDRWFLR (609 aa)) are adenylation 2. The interval 2364 to 2386 (KPSPSQLLPSSTSATHRSSGTST) is disordered. Over residues 2367–2376 (PSQLLPSSTS) the composition is skewed to low complexity. The segment covering 2377–2386 (ATHRSSGTST) has biased composition (polar residues). Residues 2597 to 2670 (WRKYLADVES…TGSEEVCYGY (74 aa)) form a condensation 2 region. The interval 2845-3368 (RCAHEIIEQQ…SGKLDRKKLR (524 aa)) is adenylation 3. The Carrier 2 domain occupies 3392–3468 (ASDEGVEGTL…NMAKRCGMLQ (77 aa)). Serine 3429 is subject to O-(pantetheine 4'-phosphoryl)serine. Residues 3512 to 3898 (CSPVQEGLLT…GQFSFVLEQL (387 aa)) form a condensation 3 region. Positions 3919 to 4454 (DSKEVALWNK…VSGKLDRKKI (536 aa)) are adenylation 4. Residues 4487–4563 (EDKSTAAKIL…ELIQAAEVET (77 aa)) form the Carrier 3 domain. An O-(pantetheine 4'-phosphoryl)serine modification is found at serine 4524. The epimerase 2 stretch occupies residues 4578-5024 (LSPIQNLYFK…DFPLLPITYD (447 aa)). The tract at residues 5052-5466 (SSVQEGILLS…PSQLVSELDL (415 aa)) is condensation 4. Residues 5552 to 5628 (SKLMEPEKRL…DMLAAISASN (77 aa)) form the Carrier 4 domain. The residue at position 5589 (serine 5589) is an O-(pantetheine 4'-phosphoryl)serine. The segment at 5628-5658 (NSSSALEPDSPADSNNEKPAEPPRLVELERN) is disordered. Over residues 5642-5657 (NNEKPAEPPRLVELER) the composition is skewed to basic and acidic residues. Positions 5720–6067 (FFFDGRGSLD…SSSDGKLGVS (348 aa)) are condensation 5. Residues 6139 to 6220 (SDILVHSDVV…GQMAVLTLHN (82 aa)) enclose the Carrier 5 domain.

The protein belongs to the NRP synthetase family. The thiolation domains are 4'-phosphopantetheinylated.

Nonribosomal peptide synthesis (NRPS) is a key mechanism responsible for the biosynthesis of bioactive metabolites which are potentially contributing to organismal virulence. Contributes to improved fungal tolerance against oxidative stress, during the infection process. In Aspergillus fumigatus (strain ATCC MYA-4609 / CBS 101355 / FGSC A1100 / Af293) (Neosartorya fumigata), this protein is Nonribosomal peptide synthetase 1 (NRPS1).